The following is a 645-amino-acid chain: MSSLISFIFLFLFSSITASAQNTFYLYHNCSVTTTFSSNSTYSTNLKTLLSSLSSLNASSYSTGFQTATAGQAPDRVTGLFLCRVDVSSEVCRSCVTFAVNETLTRCPKDKEGVFYYEQCLLRYSNRNIVATLNTDGGMFMQSARNPLSVKQDQFRDLVLTPMNLAAVEAARSFKKWAVRKIDLNASQSLYGMVRCTPDLREQDCLDCLKIGINQVTYDKIGGRILLPSCASRYDNYAFYNESNVGTPQDSSPRPGKGGNSSVIIIAVVVPITVLFLLLVAVFSVRAKNKRTLNEKEPVAEDGNDITTAGSLQFDFKAIEAATNCFLPINKLGQGGFGEVYKGTLSSGLQVAVKRLSKTSGQGEKEFENEVVVVAKLQHRNLVKLLGYCLEGEEKILVYEFVPNKSLDHFLFDSTMKMKLDWTRRYKIIGGIARGILYLHQDSRLTIIHRDLKAGNILLDDDMNPKIADFGMARIFGMDQTEAMTRRVVGTYGYMSPEYAMYGQFSMKSDVYSFGVLVLEIISGMKNSSLYQMDESVGNLVTYTWRLWSNGSPSELVDPSFGDNYQTSEITRCIHIALLCVQEDAEDRPTMSSIVQMLTTSLIALAEPRPPGFFFRSKQEQAGPSIDSSTHCSVDEASITRVTPR.

Positions 1-20 are cleaved as a signal peptide; sequence MSSLISFIFLFLFSSITASA. The Extracellular segment spans residues 21–262; it reads QNTFYLYHNC…PRPGKGGNSS (242 aa). Gnk2-homologous domains lie at 24 to 129 and 135 to 239; these read FYLY…NRNI and TDGG…NYAF. 7 N-linked (GlcNAc...) asparagine glycosylation sites follow: Asn29, Asn39, Asn57, Asn101, Asn185, Asn241, and Asn260. A helical transmembrane segment spans residues 263 to 283; sequence VIIIAVVVPITVLFLLLVAVF. Over 284 to 645 the chain is Cytoplasmic; sequence SVRAKNKRTL…EASITRVTPR (362 aa). The Protein kinase domain occupies 326–603; the sequence is FLPINKLGQG…IVQMLTTSLI (278 aa). ATP is bound by residues 332-340 and Lys354; that span reads LGQGGFGEV. Phosphotyrosine is present on Tyr399. Asp451 functions as the Proton acceptor in the catalytic mechanism. Residue Thr491 is modified to Phosphothreonine. Tyr499 is subject to Phosphotyrosine. Positions 616-645 are disordered; sequence RSKQEQAGPSIDSSTHCSVDEASITRVTPR. Over residues 620–632 the composition is skewed to polar residues; that stretch reads EQAGPSIDSSTHC.

This sequence belongs to the protein kinase superfamily. Ser/Thr protein kinase family. CRK subfamily. In terms of assembly, interacts with MWL1.

The protein localises to the membrane. The enzyme catalyses L-seryl-[protein] + ATP = O-phospho-L-seryl-[protein] + ADP + H(+). It catalyses the reaction L-threonyl-[protein] + ATP = O-phospho-L-threonyl-[protein] + ADP + H(+). The polypeptide is Cysteine-rich receptor-like protein kinase 19 (CRK19) (Arabidopsis thaliana (Mouse-ear cress)).